The sequence spans 273 residues: Diaminopimelate epimerase (273 aa).

Substrate-binding residues include Asn11 and Asn60. Catalysis depends on Cys69, which acts as the Proton donor. Substrate contacts are provided by residues 70-71, Asn181, and 199-200; these read GN and ER. Cys209 functions as the Proton acceptor in the catalytic mechanism. A substrate-binding site is contributed by 210–211; the sequence is GT.

Belongs to the diaminopimelate epimerase family. Homodimer.

Its subcellular location is the cytoplasm. The catalysed reaction is (2S,6S)-2,6-diaminopimelate = meso-2,6-diaminopimelate. It participates in amino-acid biosynthesis; L-lysine biosynthesis via DAP pathway; DL-2,6-diaminopimelate from LL-2,6-diaminopimelate: step 1/1. Functionally, catalyzes the stereoinversion of LL-2,6-diaminopimelate (L,L-DAP) to meso-diaminopimelate (meso-DAP), a precursor of L-lysine and an essential component of the bacterial peptidoglycan. The polypeptide is Diaminopimelate epimerase (Helicobacter pylori (strain HPAG1)).